Consider the following 322-residue polypeptide: uncharacterized protein (322 aa).

The next 9 helical transmembrane spans lie at 5–25 (LISI…IPGI), 37–57 (IGPS…FKET), 71–91 (LPLL…LTSF), 109–129 (MMYV…MPFI), 153–173 (SFKM…LPFV), 189–209 (LFSL…VIMI), 245–265 (LLLI…APDI), 268–288 (PITI…ATFV), and 300–320 (IYPI…FALL).

It localises to the cell membrane. This is an uncharacterized protein from Methanocaldococcus jannaschii (strain ATCC 43067 / DSM 2661 / JAL-1 / JCM 10045 / NBRC 100440) (Methanococcus jannaschii).